We begin with the raw amino-acid sequence, 277 residues long: NH(3)-dependent NAD(+) synthetase (277 aa).

Residue 46 to 53 (GISGGQDS) participates in ATP binding. Asp52 serves as a coordination point for Mg(2+). Arg142 contacts deamido-NAD(+). Thr162 contributes to the ATP binding site. Residue Glu167 coordinates Mg(2+). Residues Lys175 and Asp182 each contribute to the deamido-NAD(+) site. ATP is bound by residues Lys191 and Thr213. Position 263 to 264 (263 to 264 (HK)) interacts with deamido-NAD(+).

This sequence belongs to the NAD synthetase family. In terms of assembly, homodimer.

The catalysed reaction is deamido-NAD(+) + NH4(+) + ATP = AMP + diphosphate + NAD(+) + H(+). The protein operates within cofactor biosynthesis; NAD(+) biosynthesis; NAD(+) from deamido-NAD(+) (ammonia route): step 1/1. Its function is as follows. Catalyzes the ATP-dependent amidation of deamido-NAD to form NAD. Uses ammonia as a nitrogen source. The sequence is that of NH(3)-dependent NAD(+) synthetase from Corynebacterium glutamicum (strain R).